The primary structure comprises 284 residues: Bifunctional protein FolD (284 aa).

NADP(+)-binding positions include 166–168 (GAS), S191, and I232.

It belongs to the tetrahydrofolate dehydrogenase/cyclohydrolase family. In terms of assembly, homodimer.

The catalysed reaction is (6R)-5,10-methylene-5,6,7,8-tetrahydrofolate + NADP(+) = (6R)-5,10-methenyltetrahydrofolate + NADPH. It catalyses the reaction (6R)-5,10-methenyltetrahydrofolate + H2O = (6R)-10-formyltetrahydrofolate + H(+). It participates in one-carbon metabolism; tetrahydrofolate interconversion. Its function is as follows. Catalyzes the oxidation of 5,10-methylenetetrahydrofolate to 5,10-methenyltetrahydrofolate and then the hydrolysis of 5,10-methenyltetrahydrofolate to 10-formyltetrahydrofolate. This chain is Bifunctional protein FolD, found in Neisseria meningitidis serogroup C (strain 053442).